Consider the following 178-residue polypeptide: Bifunctional protein PyrR (178 aa).

The PRPP-binding signature appears at 99–111; the sequence is VVLVDDVIYTGRT.

The protein belongs to the purine/pyrimidine phosphoribosyltransferase family. PyrR subfamily. Homodimer and homohexamer; in equilibrium.

It carries out the reaction UMP + diphosphate = 5-phospho-alpha-D-ribose 1-diphosphate + uracil. In terms of biological role, regulates transcriptional attenuation of the pyrimidine nucleotide (pyr) operon by binding in a uridine-dependent manner to specific sites on pyr mRNA. This disrupts an antiterminator hairpin in the RNA and favors formation of a downstream transcription terminator, leading to a reduced expression of downstream genes. Also displays a weak uracil phosphoribosyltransferase activity which is not physiologically significant. The chain is Bifunctional protein PyrR from Thermoanaerobacter pseudethanolicus (strain ATCC 33223 / 39E) (Clostridium thermohydrosulfuricum).